The following is a 795-amino-acid chain: TBC1 domain family member 5 (795 aa).

The segment covering 1–13 (MYHSLSETRHPLQ) has biased composition (basic and acidic residues). The segment at 1 to 49 (MYHSLSETRHPLQPEEQEVGIDPLSSYSNKSGGDSNKNGRRTSSTLDSE) is disordered. The segment covering 25 to 49 (SSYSNKSGGDSNKNGRRTSSTLDSE) has biased composition (polar residues). The residue at position 42 (T42) is a Phosphothreonine. S43 and S44 each carry phosphoserine. The tract at residues 56 to 64 (RKEWEELFV) is required for interaction with retromer; involved in interaction with ATG8 family proteins. Residues 57–62 (KEWEEL) carry the LIR 1 motif. The Rab-GAP TBC domain occupies 81 to 359 (LRSSRFRSIC…VVWDALFADG (279 aa)). Phosphoserine is present on S460. Positions 475–564 (PGSAGGPVPG…PPSSATKKDS (90 aa)) are disordered. Residues 484–496 (GGNSSSSSSVVIP) show a composition bias toward low complexity. A phosphoserine mark is found at S522, S539, S541, S544, S554, S570, S584, and S730. Residues 523–542 (MPVQLNKGLSSKNISSSPSV) are compositionally biased toward polar residues. Residues 554 to 564 (SPPSSATKKDS) are compositionally biased toward polar residues. The segment at 674–795 (HYCSSGQGQG…GFTIVSPLDI (122 aa)) is disordered. A compositionally biased stretch (polar residues) spans 727–748 (ARGSFSGQAQPLRTLRSTSGKS). A compositionally biased stretch (low complexity) spans 765 to 776 (PASASSSNPSSS). Residues 785-789 (SGFTI) carry the LIR 2 motif. A required for interaction with ATG8 family proteins region spans residues 786–791 (GFTIVS). S791 is subject to Phosphoserine.

In terms of assembly, interacts with MAP1LC3A, MAP1LC3B, MAP1LC3C, GABARAP, GABARAPL1, GABARAPL2. Interacts with VPS29 and VPS35; indicative for an association with retromer CSC subcomplex. MAP1LC3A and VPS29 compete for binding to TBC1D5. Interacts with AP2M1; indicative for an association with the AP2 complex. Interacts with ULK1 and ATG13 (phosphorylated); indicative for an association with the activated ULK1-ATG13-FIP200 complex. Interacts with ATG9A; the interactions seems to be restricted to the AP2-clathrin-associated fraction of ATG9A.

The protein localises to the endosome membrane. The protein resides in the cytoplasmic vesicle. It localises to the autophagosome. Its function is as follows. May act as a GTPase-activating protein (GAP) for Rab family protein(s). May act as a GAP for RAB7A. Can displace RAB7A and retromer CSC subcomplex from the endosomal membrane to the cytosol; at least retromer displacement seems to require its catalytic activity. Required for retrograde transport of cargo proteins from endosomes to the trans-Golgi network (TGN); the function seems to require its catalytic activity. Involved in regulation of autophagy. May act as a molecular switch between endosomal and autophagosomal transport and is involved in reprogramming vesicle trafficking upon autophagy induction. Involved in the trafficking of ATG9A upon activation of autophagy. May regulate the recruitment of ATG9A-AP2-containing vesicles to autophagic membranes. The protein is TBC1 domain family member 5 (TBC1D5) of Homo sapiens (Human).